We begin with the raw amino-acid sequence, 384 residues long: Galactokinase (384 aa).

34-37 (EHTD) contacts substrate. ATP is bound at residue 123-129 (SSGLSSS). Mg(2+)-binding residues include Ser129 and Glu161. Asp173 serves as the catalytic Proton acceptor. Tyr222 serves as a coordination point for substrate.

Belongs to the GHMP kinase family. GalK subfamily.

Its subcellular location is the cytoplasm. The enzyme catalyses alpha-D-galactose + ATP = alpha-D-galactose 1-phosphate + ADP + H(+). Its pathway is carbohydrate metabolism; galactose metabolism. Functionally, catalyzes the transfer of the gamma-phosphate of ATP to D-galactose to form alpha-D-galactose-1-phosphate (Gal-1-P). In Haemophilus influenzae (strain PittGG), this protein is Galactokinase.